Consider the following 308-residue polypeptide: Aspartate carbamoyltransferase catalytic subunit (308 aa).

Carbamoyl phosphate is bound by residues R59 and T60. An L-aspartate-binding site is contributed by K87. Positions 109, 137, and 140 each coordinate carbamoyl phosphate. L-aspartate contacts are provided by R170 and R224. Carbamoyl phosphate contacts are provided by G265 and P266.

This sequence belongs to the aspartate/ornithine carbamoyltransferase superfamily. ATCase family. Heterododecamer (2C3:3R2) of six catalytic PyrB chains organized as two trimers (C3), and six regulatory PyrI chains organized as three dimers (R2).

It catalyses the reaction carbamoyl phosphate + L-aspartate = N-carbamoyl-L-aspartate + phosphate + H(+). The protein operates within pyrimidine metabolism; UMP biosynthesis via de novo pathway; (S)-dihydroorotate from bicarbonate: step 2/3. Its function is as follows. Catalyzes the condensation of carbamoyl phosphate and aspartate to form carbamoyl aspartate and inorganic phosphate, the committed step in the de novo pyrimidine nucleotide biosynthesis pathway. The chain is Aspartate carbamoyltransferase catalytic subunit from Flavobacterium johnsoniae (strain ATCC 17061 / DSM 2064 / JCM 8514 / BCRC 14874 / CCUG 350202 / NBRC 14942 / NCIMB 11054 / UW101) (Cytophaga johnsonae).